The following is a 181-amino-acid chain: Lysozyme C (181 aa).

A signal peptide spans 1 to 19 (MRIAFFLLILSIIVGLAYG). Residues 139–181 (LTDSRPLGPFNVTEEEMDQLFIDHEIAMAQCEAEKTCNGFDLE) constitute a propeptide that is removed on maturation.

This sequence belongs to the dictyostelium lysozyme family. In terms of processing, contains six disulfide bonds.

The protein localises to the cytoplasmic vesicle lumen. It carries out the reaction Hydrolysis of (1-&gt;4)-beta-linkages between N-acetylmuramic acid and N-acetyl-D-glucosamine residues in a peptidoglycan and between N-acetyl-D-glucosamine residues in chitodextrins.. Has antibacterial activity. The chain is Lysozyme C (alyC) from Dictyostelium discoideum (Social amoeba).